Consider the following 277-residue polypeptide: NH(3)-dependent NAD(+) synthetase (277 aa).

36-43 is a binding site for ATP; sequence GLSGGIDS. Asp-42 provides a ligand contact to Mg(2+). Residue Arg-118 coordinates deamido-NAD(+). Thr-138 lines the ATP pocket. Position 143 (Glu-143) interacts with Mg(2+). ATP contacts are provided by Lys-167 and Ser-189.

It belongs to the NAD synthetase family. In terms of assembly, homodimer.

It carries out the reaction deamido-NAD(+) + NH4(+) + ATP = AMP + diphosphate + NAD(+) + H(+). The protein operates within cofactor biosynthesis; NAD(+) biosynthesis; NAD(+) from deamido-NAD(+) (ammonia route): step 1/1. Catalyzes the ATP-dependent amidation of deamido-NAD to form NAD. Uses ammonia as a nitrogen source. The protein is NH(3)-dependent NAD(+) synthetase of Chlorobium phaeobacteroides (strain BS1).